The primary structure comprises 293 residues: uncharacterized protein (293 aa).

Active-site charge relay system residues include Thr43 and Tyr105. Tyr131 serves as the catalytic Proton donor. Residue Lys159 is the Schiff-base intermediate with substrate of the active site.

The protein belongs to the DapA family. As to quaternary structure, homotetramer.

It localises to the cytoplasm. This is an uncharacterized protein from Thermococcus onnurineus (strain NA1).